Consider the following 435-residue polypeptide: MKPVNIGLLGLGTVGGGAAAVLRDNAEEISRRLGREIRISAMCDLSEEKARQICPSAAFVKDPFELVARKDVDVVVELFGGTGIAKEAVLKAIENGKHIVTANKKLLAEYGNEIFPLAEKQNVIVQFEAAVAGGIPIIKALREGLAANRIKSIAGIINGTSNFILSEMREKGSAFADVLKEAQALGYAEADPTFDIEGNDAGHKITIMSALAFGTPMNFSACYLEGISKLDSRDIKYAEELGYRIKLLGVTRKTGKGIELRVHPTLIPESRLLANVDGVMNAVRVNADMVGETLYYGAGAGALPTASAVVADIIDIARLVEADTAHRVPHLAFQPAQVQAQTILPMDEITSSYYLRVQAKDEPGTLGQIAALLAQENVSIEALIQKGVIDQTTAEIVILTHSTVEKHIKSAIAAIEALDCVEKPITMIRMESLHD.

NADPH contacts are provided by T13, V14, and K104. Residue V14 coordinates NAD(+). V14 and K104 together coordinate NADP(+). Na(+) is bound by residues E128, V131, G133, and I135. Residues G186 and E189 each coordinate NADP(+). E189 and D200 together coordinate L-homoserine. The active-site Proton donor is K204. G301 contacts NADPH. G301 is a binding site for NAD(+). G301 contributes to the NADP(+) binding site. Residues 354-429 (YLRVQAKDEP…CVEKPITMIR (76 aa)) enclose the ACT domain.

Belongs to the homoserine dehydrogenase family. As to quaternary structure, homotetramer. It depends on a metal cation as a cofactor.

The enzyme catalyses L-homoserine + NAD(+) = L-aspartate 4-semialdehyde + NADH + H(+). The protein operates within amino-acid biosynthesis; L-methionine biosynthesis via de novo pathway; L-homoserine from L-aspartate: step 3/3. It participates in amino-acid biosynthesis; L-threonine biosynthesis; L-threonine from L-aspartate: step 3/5. With respect to regulation, neither NaCl nor KCl increase the activity. L-threonine and L-serine do not markedly inhibit the oxidation activity. Functionally, catalyzes the conversion of L-aspartate-beta-semialdehyde (L-Asa) to L-homoserine (L-Hse), the third step in the biosynthesis of threonine and methionine from aspartate. Is highly specific for NAD(+), and displays an approximate 479-fold (kcat/Km) preference for NAD(+) over NADP(+). This chain is Homoserine dehydrogenase, found in Neisseria gonorrhoeae (strain ATCC 700825 / FA 1090).